The primary structure comprises 92 residues: UPF0223 protein SZO_10560 (92 aa).

This sequence belongs to the UPF0223 family.

The polypeptide is UPF0223 protein SZO_10560 (Streptococcus equi subsp. zooepidemicus (strain H70)).